Reading from the N-terminus, the 783-residue chain is DNA repair and recombination protein RAD54-like (783 aa).

A required for chromatin remodeling, strand pairing activities and coupling of ATPase activity region spans residues 2–9 (RRSLAPSQ). At threonine 22 the chain carries Phosphothreonine. The Helicase ATP-binding domain occupies 165–340 (EGKRGNFNGC…FSLVNFVNPE (176 aa)). 178–185 (DEMGLGKT) contacts ATP. The DEGH box signature appears at 291–294 (DEGH). One can recognise a Helicase C-terminal domain in the interval 497 to 654 (LLDFMLAAIR…NNESSEKHFT (158 aa)). Positions 737-783 (AESKPAAITEDDESEQQQQSPKRTSKNDDNDEDFDPENSAEEQFLGF) are disordered. A compositionally biased stretch (acidic residues) spans 765 to 776 (DNDEDFDPENSA).

Belongs to the SNF2/RAD54 helicase family. As to quaternary structure, interacts (via N-terminus) with spn-A/Rad51.

It is found in the nucleus. In terms of biological role, involved in mitotic DNA repair and meiotic recombination. Functions in the recombinational DNA repair pathway. Essential for interhomolog gene conversion (GC), but may have a less important role in intersister GC than spn-A/Rad51. In the presence of DNA, spn-A/Rad51 enhances the ATPase activity of okr/Rad54. The polypeptide is DNA repair and recombination protein RAD54-like (Drosophila mojavensis (Fruit fly)).